The primary structure comprises 950 residues: MIDLSFLTEEEQDAILKVLQRDAALKRAEEERVRHLPEKIKDDQQLKNMSGQWFYEAKAKRHRDKIHGADIIRASMRRKKLPAAAEQNKDTAMRAKESWVNNVNKDAVLPPEIAVVEEPEDDTDPAGPSSSLVDPASSVIDMSQESTRTPAVSLPKQRKNPFNSPKLPEDHSLQQTKPEQSKTGKAGLFQISKEGELSESKEKSSIPDMPRQQLEKPKQTVSTEPENASHTKAPIPKARKLIYKSNDLEKDDNQSFPRQRRDSLNARGAPRGILKRNSSSSSTDSETLRLNYNLDPKSKILSPGLTIHERISEKEFSLEDDSSTSSLEPLKHVRFSAVKNELPQSPRPVLGQEVGEFTVLESDQLQNGTEDAGDIEEFQNHPELSHKTPLSHYQLVSSPSDSGREREQLMSSGSAPRDEIPCHSDILPTGPQCVESSSVINGQQEKSSHFTKLPSELSKSPSDELTQCGEPEPSQTADHSFRDHRQGSEEEHSPVLKTLERRAARKLPSKSLEDIPSDSSNQAKVDNLPEELVRSAEDDQKADQEPDTNECIPGISTVPSLPDNQFSHPDKLKRMSKSVPAFLQDESDDRETDTASESSYQLRRYKKSPSSLTNLSSSSGMTSLSSASGSVMSVYSGDFGNLEVKGSVQFALDYVESLKELHVFVAQCKDLAAADVKKQRSDPYVKTYLLPDKGKMGKKKTLVVKKTLNPVYNEILRYKIERQFLKTQKLNLSVWHRDTFKRNSFLGEVELDLETWDWDSKQNKQLKWYPLKRKTAPVALETENRGEMKLALQYVPEPSPGKKLPTTGEVHIWVKECLDLPLLRGSHLNSFVKCTILPDTSRKSRQKTRAVGKTTNPVFNHTMVYDGFRPEDLMEACVELTVWDHYKLTNQFLGGLRIGFGTGKSYGTEVDWMDSTSEEVALWEKMVNSPNTWVEATLPLRMLLIAKLSK.

Residues 1-57 (MIDLSFLTEEEQDAILKVLQRDAALKRAEEERVRHLPEKIKDDQQLKNMSGQWFYEA) form the RabBD domain. Disordered stretches follow at residues 78-98 (RKKL…AKES), 116-289 (VEEP…ETLR), and 361-620 (ESDQ…SSSG). Residues 87-97 (QNKDTAMRAKE) are compositionally biased toward basic and acidic residues. Polar residues-rich tracts occupy residues 140–150 (IDMSQESTRTP) and 173–183 (LQQTKPEQSKT). The span at 193–205 (KEGELSESKEKSS) shows a compositional bias: basic and acidic residues. Positions 219-230 (QTVSTEPENASH) are enriched in polar residues. The span at 246-264 (NDLEKDDNQSFPRQRRDSL) shows a compositional bias: basic and acidic residues. A compositionally biased stretch (polar residues) spans 434–445 (VESSSVINGQQE). 2 stretches are compositionally biased toward basic and acidic residues: residues 479 to 502 (HSFR…LERR) and 531 to 544 (ELVR…KADQ). A compositionally biased stretch (polar residues) spans 557-567 (TVPSLPDNQFS). The segment covering 608–620 (SPSSLTNLSSSSG) has biased composition (low complexity). C2 domains lie at 644–769 (VKGS…LKWY) and 784–913 (NRGE…VDWM).

Monomer. Binds NRXN1. Binds RAB27A that has been activated by GTP-binding. Interacts with RAB27B. Post-translationally, isoform 1 is highly susceptible to proteolytic degradation and is stabilized by the interaction with RAB27A. As to expression, highly expressed in brain, lung, kidney, testis and in embryos after day 7. Detected at lower levels in skeletal muscle. Expressed in pancreatic alpha cells. Isoform 6 is highly expressed in brain, but not detectable in the other tissues tested. Isoform 1 is expressed abundantly in the stomach and is predominantly localized at the apical region of gastric-surface mucus cells. Isoform 11 is expressed in cytotoxic T-lymphocytes (CTL).

The protein localises to the melanosome membrane. It localises to the cell membrane. Its function is as follows. Isoform 11 acts as a RAB27A effector protein and plays a role in cytotoxic granule exocytosis in lymphocytes. Required for cytotoxic granule docking at the immunologic synapse. Isoform 1 may play a role in melanosome transport and vesicle trafficking. It controls melanosome distribution in the cell periphery and regulates melanocyte morphology. Isoform 1 acts as a positive mediator of mucus secretion by the surface mucus cells of the stomach. Mediates basal mucus secretion by gastric surface cells by promoting the proper granule biognesis and docking of mucus granules with the apical plasma membrane. This chain is Synaptotagmin-like protein 2 (Sytl2), found in Mus musculus (Mouse).